The chain runs to 516 residues: 2-isopropylmalate synthase (516 aa).

One can recognise a Pyruvate carboxyltransferase domain in the interval 5–267 (IIIFDTTLRD…STDINIKEIH (263 aa)). The Mn(2+) site is built by D14, H202, H204, and N238. The segment at 393–516 (KLEYFDVQSK…VNKELERLQK (124 aa)) is regulatory domain.

It belongs to the alpha-IPM synthase/homocitrate synthase family. LeuA type 1 subfamily. As to quaternary structure, homodimer. The cofactor is Mn(2+).

The protein resides in the cytoplasm. It catalyses the reaction 3-methyl-2-oxobutanoate + acetyl-CoA + H2O = (2S)-2-isopropylmalate + CoA + H(+). Its pathway is amino-acid biosynthesis; L-leucine biosynthesis; L-leucine from 3-methyl-2-oxobutanoate: step 1/4. Its function is as follows. Catalyzes the condensation of the acetyl group of acetyl-CoA with 3-methyl-2-oxobutanoate (2-ketoisovalerate) to form 3-carboxy-3-hydroxy-4-methylpentanoate (2-isopropylmalate). The chain is 2-isopropylmalate synthase from Buchnera aphidicola subsp. Cinara cedri (strain Cc).